A 426-amino-acid polypeptide reads, in one-letter code: Protein FAM181B (426 aa).

Disordered regions lie at residues 106-157 (GLMG…AAAA) and 226-246 (NLPPSFFTEPSRAGGGGCGPS). Positions 128-141 (PLAAPSAPTVAAPA) are enriched in low complexity.

It belongs to the FAM181 family.

The sequence is that of Protein FAM181B (FAM181B) from Homo sapiens (Human).